A 337-amino-acid polypeptide reads, in one-letter code: Putative [LysW]-lysine/[LysW]-ornithine hydrolase (337 aa).

Histidine 67 provides a ligand contact to Zn(2+). Residue aspartate 69 is part of the active site. Aspartate 91 serves as a coordination point for Zn(2+). Residue glutamate 118 is the Proton acceptor of the active site. Glutamate 119, glutamate 140, and histidine 298 together coordinate Zn(2+).

The protein belongs to the peptidase M20A family. LysK subfamily. Requires Zn(2+) as cofactor. Co(2+) is required as a cofactor.

Its subcellular location is the cytoplasm. It carries out the reaction [amino-group carrier protein]-C-terminal-gamma-(L-lysyl)-L-glutamate + H2O = [amino-group carrier protein]-C-terminal-L-glutamate + L-lysine. The catalysed reaction is [amino-group carrier protein]-C-terminal-gamma-(L-ornithyl)-L-glutamate + H2O = [amino-group carrier protein]-C-terminal-L-glutamate + L-ornithine. It functions in the pathway amino-acid biosynthesis; L-lysine biosynthesis via AAA pathway; L-lysine from L-alpha-aminoadipate (Thermus route): step 5/5. Its pathway is amino-acid biosynthesis; L-arginine biosynthesis. In terms of biological role, catalyzes the release of L-lysine from [LysW]-gamma-L-lysine and the release of L-ornithine from [LysW]-L-ornithine. The protein is Putative [LysW]-lysine/[LysW]-ornithine hydrolase of Pyrococcus abyssi (strain GE5 / Orsay).